The chain runs to 122 residues: Small ribosomal subunit protein uS13 (122 aa).

The interval 99-122 (RGQRTHTNARTRKGPAKAIAGKKK) is disordered.

Belongs to the universal ribosomal protein uS13 family. As to quaternary structure, part of the 30S ribosomal subunit. Forms a loose heterodimer with protein S19. Forms two bridges to the 50S subunit in the 70S ribosome.

Functionally, located at the top of the head of the 30S subunit, it contacts several helices of the 16S rRNA. In the 70S ribosome it contacts the 23S rRNA (bridge B1a) and protein L5 of the 50S subunit (bridge B1b), connecting the 2 subunits; these bridges are implicated in subunit movement. Contacts the tRNAs in the A and P-sites. The chain is Small ribosomal subunit protein uS13 from Bradyrhizobium sp. (strain BTAi1 / ATCC BAA-1182).